Consider the following 427-residue polypeptide: Mitogen-activated protein kinase 8 (427 aa).

Positions 26-321 (YQNLKPIGSG…VDEALQHPYI (296 aa)) constitute a Protein kinase domain. ATP is bound by residues 32 to 40 (IGSGAQGIV) and Lys-55. The residue at position 116 (Cys-116) is an S-nitrosocysteine. The active-site Proton acceptor is the Asp-151. Thr-183 is subject to Phosphothreonine; by MAP2K7. The TXY motif lies at 183–185 (TPY). Residue Tyr-185 is modified to Phosphotyrosine; by MAP2K4. Residues Met-301 and Ser-377 each carry the phosphoserine modification. Residues 371–427 (VIRGQPSPLGAAVINGSQHPSSSSSVNDVSSMSTDPTLASDTDSSLEAAAGPLGCCR) are disordered. The span at 387-403 (SQHPSSSSSVNDVSSMS) shows a compositional bias: low complexity. A compositionally biased stretch (polar residues) spans 404 to 415 (TDPTLASDTDSS).

Belongs to the protein kinase superfamily. CMGC Ser/Thr protein kinase family. MAP kinase subfamily. In terms of assembly, forms a complex with MAPK8IP1 and ARHGEF28. Found in a complex with SH3RF1, RAC1, MAP3K11/MLK3, MAP2K7/MKK7 and MAPK8IP1/JIP1. Found in a complex with SH3RF1, RAC2, MAP3K7/TAK1, MAP2K7/MKK7, MAPK8IP1/JIP1 and MAPK9/JNK2. Binds to at least four scaffolding proteins, MAPK8IP1/JIP-1, MAPK8IP2/JIP-2, MAPK8IP3/JIP-3/JSAP1 and SPAG9/MAPK8IP4/JIP-4. These proteins also bind other components of the JNK signaling pathway. Interacts with TP53 and WWOX. Interacts with JAMP. Interacts with HSF1 (via D domain and preferentially with hyperphosphorylated form); this interaction occurs under both normal growth conditions and immediately upon heat shock. Interacts (phosphorylated form) with NFE2; the interaction phosphorylates NFE2 in undifferentiated cells. Interacts with NFATC4. Interacts with MECOM; regulates JNK signaling. Interacts with PIN1; this interaction mediates MAPK8 conformational changes leading to the binding of MAPK8 to its substrates. Interacts with GRIPAP1. Interacts with POU5F1; phosphorylates POU5F1 at 'Ser-355'. Interacts with STMN2, STMN3 and STMN4. Interacts with HSF4. Mg(2+) is required as a cofactor. Post-translationally, dually phosphorylated on Thr-183 and Tyr-185 by MAP2K7 and MAP2K4, which activates the enzyme. Phosphorylated by TAOK2. May be phosphorylated at Thr-183 and Tyr-185 by MAP3K1/MEKK1. Phosphorylated form is more concentrated at synapses than none-phosphorylated.

Its subcellular location is the cytoplasm. The protein resides in the nucleus. The protein localises to the synapse. It carries out the reaction L-seryl-[protein] + ATP = O-phospho-L-seryl-[protein] + ADP + H(+). The enzyme catalyses L-threonyl-[protein] + ATP = O-phospho-L-threonyl-[protein] + ADP + H(+). With respect to regulation, activated by threonine and tyrosine phosphorylation by either of two dual specificity kinases, MAP2K4 and MAP2K7. MAP2K4 shows a strong preference for Tyr-185 while MAP2K7 phosphorylates Tyr-183 preferentially. Inhibited by dual specificity phosphatases, such as DUSP1. Inhibited by SERPINB3. Its function is as follows. Serine/threonine-protein kinase involved in various processes such as cell proliferation, differentiation, migration, transformation and programmed cell death. Extracellular stimuli such as pro-inflammatory cytokines or physical stress stimulate the stress-activated protein kinase/c-Jun N-terminal kinase (SAP/JNK) signaling pathway. In this cascade, two dual specificity kinases MAP2K4/MKK4 and MAP2K7/MKK7 phosphorylate and activate MAPK8/JNK1. In turn, MAPK8/JNK1 phosphorylates a number of transcription factors, primarily components of AP-1 such as JUN, JDP2 and ATF2 and thus regulates AP-1 transcriptional activity. Phosphorylates the replication licensing factor CDT1, inhibiting the interaction between CDT1 and the histone H4 acetylase HBO1 to replication origins. Loss of this interaction abrogates the acetylation required for replication initiation. Promotes stressed cell apoptosis by phosphorylating key regulatory factors including p53/TP53 and Yes-associates protein YAP1. In T-cells, MAPK8 and MAPK9 are required for polarized differentiation of T-helper cells into Th1 cells. Contributes to the survival of erythroid cells by phosphorylating the antagonist of cell death BAD upon EPO stimulation. Mediates starvation-induced BCL2 phosphorylation, BCL2 dissociation from BECN1, and thus activation of autophagy. Phosphorylates STMN2 and hence regulates microtubule dynamics, controlling neurite elongation in cortical neurons. In the developing brain, through its cytoplasmic activity on STMN2, negatively regulates the rate of exit from multipolar stage and of radial migration from the ventricular zone. Phosphorylates several other substrates including heat shock factor protein 4 (HSF4), the deacetylase SIRT1, ELK1, or the E3 ligase ITCH. Phosphorylates the CLOCK-BMAL1 heterodimer and plays a role in the regulation of the circadian clock. Phosphorylates the heat shock transcription factor HSF1, suppressing HSF1-induced transcriptional activity. Phosphorylates POU5F1, which results in the inhibition of POU5F1's transcriptional activity and enhances its proteasomal degradation. Phosphorylates JUND and this phosphorylation is inhibited in the presence of MEN1. In neurons, phosphorylates SYT4 which captures neuronal dense core vesicles at synapses. Phosphorylates EIF4ENIF1/4-ET in response to oxidative stress, promoting P-body assembly. Phosphorylates SIRT6 in response to oxidative stress, stimulating its mono-ADP-ribosyltransferase activity. Phosphorylates NLRP3, promoting assembly of the NLRP3 inflammasome. Phosphorylates ALKBH5 in response to reactive oxygen species (ROS), promoting ALKBH5 sumoylation and inactivation. JNK1 isoforms display different binding patterns: beta-1 preferentially binds to c-Jun, whereas alpha-1, alpha-2, and beta-2 have a similar low level of binding to both c-Jun or ATF2. However, there is no correlation between binding and phosphorylation, which is achieved at about the same efficiency by all isoforms. This chain is Mitogen-activated protein kinase 8 (MAPK8), found in Homo sapiens (Human).